The sequence spans 32 residues: ATP synthase 28 kDa subunit, mitochondrial (32 aa).

It is found in the mitochondrion. It localises to the mitochondrion inner membrane. Mitochondrial membrane ATP synthase (F(1)F(0) ATP synthase or Complex V) produces ATP from ADP in the presence of a proton gradient across the membrane which is generated by electron transport complexes of the respiratory chain. F-type ATPases consist of two structural domains, F(1) - containing the extramembraneous catalytic core and F(0) - containing the membrane proton channel, linked together by a central stalk and a peripheral stalk. During catalysis, ATP synthesis in the catalytic domain of F(1) is coupled via a rotary mechanism of the central stalk subunits to proton translocation. Part of the complex F(0) domain. This is ATP synthase 28 kDa subunit, mitochondrial from Spinacia oleracea (Spinach).